Consider the following 274-residue polypeptide: Penicillin-insensitive murein endopeptidase (274 aa).

An N-terminal signal peptide occupies residues 1 to 19; that stretch reads MKKTAIALLAWFVSSASLA. Cystine bridges form between Cys-44/Cys-265, Cys-187/Cys-235, and Cys-216/Cys-223. Positions 110, 113, 120, 147, and 150 each coordinate Zn(2+). Residues 225–274 form a disordered region; that stretch reads DQPLPPPGDGCGAELQSWFEPPKPGTTKPEKKTPPPLPPSCQALLDEHVL.

This sequence belongs to the peptidase M74 family. In terms of assembly, dimer. It depends on Zn(2+) as a cofactor.

It is found in the periplasm. Functionally, murein endopeptidase that cleaves the D-alanyl-meso-2,6-diamino-pimelyl amide bond that connects peptidoglycan strands. Likely plays a role in the removal of murein from the sacculus. This Salmonella paratyphi A (strain ATCC 9150 / SARB42) protein is Penicillin-insensitive murein endopeptidase.